A 399-amino-acid chain; its full sequence is Ras-related GTP-binding protein C (399 aa).

The interval 1-20 (MSLQYGAEETPLAGSYGAAD) is disordered. An N-acetylserine modification is found at Ser-2. Residues Ser-2 and Ser-15 each carry the phosphoserine modification. GDP-binding residues include Arg-71, Ser-72, Gly-73, Lys-74, Ser-75, Ser-76, Thr-90, Glu-94, Thr-96, His-178, Lys-179, Asp-181, Ser-219, and Ile-220. Position 74 (Lys-74) interacts with GTP. Thr-90 contacts GTP. Position 96 (Thr-96) interacts with GTP. Residue Thr-96 is modified to Phosphothreonine. A GTP-binding site is contributed by Asp-181.

Belongs to the GTR/RAG GTP-binding protein family. As to quaternary structure, forms a heterodimer with RRAGA, in a sequence-independent manner, and RRAGB. Heterodimerization stabilizes proteins of the heterodimer. The GDP-bound form of RRAGC (in complex with the GTP-bound form of RRAGA or RRAGB), interacts with RPTOR, thereby promoting recruitment of mTORC1 to the lysosomes. Component of the lysosomal folliculin complex (LFC), composed of FLCN, FNIP1 (or FNIP2), RagA/RRAGA or RagB/RRAGB GDP-bound, RagC/RRAGC or RagD/RRAGD GTP-bound, and Ragulator. Interacts with NOL8. Interacts with SH3BP4; the interaction with this negative regulator is most probably direct, preferentially occurs with the inactive GDP-bound form of RRAGB, is negatively regulated by amino acids and prevents interaction with RPTOR. The Rag heterodimer interacts with SLC38A9; the probable amino acid sensor. Interacts with SESN1, SESN2 and SESN3. Interacts with PIP4P1. The Rag heterodimer interacts with the Ragulator complex. The GDP-bound form interacts with TFEB. The GDP-bound form interacts with TFE3.

The protein localises to the cytoplasm. It is found in the nucleus. Its subcellular location is the lysosome membrane. The catalysed reaction is GTP + H2O = GDP + phosphate + H(+). The activation of RagC/RRAGC is mediated by a GTPase activating protein (GAP). In high-amino acid conditions, activated by GTPase activating protein FLCN that stimulates RRAGC GTPase activity to turn it into its active GDP-bound form. In response to amino acid depletion, the GATOR1 complex inactivates RagC/RRAGC by securing the GTP-bound inactive form. Its function is as follows. Guanine nucleotide-binding protein that plays a crucial role in the cellular response to amino acid availability through regulation of the mTORC1 signaling cascade. Forms heterodimeric Rag complexes with RagA/RRAGA or RagB/RRAGB and cycles between an inactive GTP-bound and an active GDP-bound form: RagC/RRAGC is in its active form when GDP-bound RagC/RRAGC forms a complex with GTP-bound RagA/RRAGA (or RagB/RRAGB) and in an inactive form when GTP-bound RagC/RRAGC heterodimerizes with GDP-bound RagA/RRAGA (or RagB/RRAGB). In its GDP-bound active form, promotes the recruitment of mTORC1 to the lysosomes and its subsequent activation by the GTPase RHEB. This is a crucial step in the activation of the MTOR signaling cascade by amino acids. Also plays a central role in the non-canonical mTORC1 complex, which acts independently of RHEB and specifically mediates phosphorylation of MiT/TFE factors TFEB and TFE3: GDP-bound RagC/RRAGC mediates recruitment of MiT/TFE factors TFEB and TFE3. This Homo sapiens (Human) protein is Ras-related GTP-binding protein C.